The sequence spans 213 residues: 3-dehydroquinate dehydratase (213 aa).

Residues 27–29 (EVR) and Arg-53 each bind 3-dehydroquinate. His-111 functions as the Proton donor/acceptor in the catalytic mechanism. Catalysis depends on Lys-138, which acts as the Schiff-base intermediate with substrate. Residues Arg-175 and Gln-197 each coordinate 3-dehydroquinate.

The protein belongs to the type-I 3-dehydroquinase family. In terms of assembly, homodimer.

The catalysed reaction is 3-dehydroquinate = 3-dehydroshikimate + H2O. Its pathway is metabolic intermediate biosynthesis; chorismate biosynthesis; chorismate from D-erythrose 4-phosphate and phosphoenolpyruvate: step 3/7. Functionally, involved in the third step of the chorismate pathway, which leads to the biosynthesis of aromatic amino acids. Catalyzes the cis-dehydration of 3-dehydroquinate (DHQ) and introduces the first double bond of the aromatic ring to yield 3-dehydroshikimate. In Thermococcus gammatolerans (strain DSM 15229 / JCM 11827 / EJ3), this protein is 3-dehydroquinate dehydratase.